Consider the following 486-residue polypeptide: Homoserine O-acetyltransferase (486 aa).

The region spanning 66 to 436 (NVLVICHALT…PEGHDAFLLE (371 aa)) is the AB hydrolase-1 domain. Residue Ser-162 is part of the active site. The active-site Nucleophile is the Ser-162. The disordered stretch occupies residues 248 to 274 (KFSRRSPSIAQQQKAQKAEVRKPSTVS). Residues 250–262 (SRRSPSIAQQQKA) are compositionally biased toward polar residues. Active-site residues include Asp-401 and His-430.

This sequence belongs to the AB hydrolase superfamily. MetX family.

The enzyme catalyses L-homoserine + acetyl-CoA = O-acetyl-L-homoserine + CoA. It participates in amino-acid biosynthesis; L-methionine biosynthesis via de novo pathway; O-acetyl-L-homoserine from L-homoserine: step 1/1. Functionally, commits homoserine to the methionine biosynthesis pathway by catalyzing its O-acetylation. This chain is Homoserine O-acetyltransferase (MET2), found in Saccharomyces pastorianus (Lager yeast).